A 94-amino-acid chain; its full sequence is MRQYEVMYILKPDLEDEESTQLIEKFSKIITDRDGEITELNRWGKRRLAYEIKDYREGHYVVMKCRAEHAAAQELDRVFRITDGLLRHMIIRED.

This sequence belongs to the bacterial ribosomal protein bS6 family.

Functionally, binds together with bS18 to 16S ribosomal RNA. This Desulforudis audaxviator (strain MP104C) protein is Small ribosomal subunit protein bS6.